Here is a 380-residue protein sequence, read N- to C-terminus: Queuine tRNA-ribosyltransferase (380 aa).

Residue D96 is the Proton acceptor of the active site. Substrate-binding positions include 96–100 (DSGGF), D150, Q193, and G220. The interval 251-257 (GVGAPDS) is RNA binding. D270 acts as the Nucleophile in catalysis. The segment at 275-279 (TRIAR) is RNA binding; important for wobble base 34 recognition. The Zn(2+) site is built by C308, C310, C313, and H339.

This sequence belongs to the queuine tRNA-ribosyltransferase family. In terms of assembly, homodimer. Within each dimer, one monomer is responsible for RNA recognition and catalysis, while the other monomer binds to the replacement base PreQ1. Zn(2+) is required as a cofactor.

The enzyme catalyses 7-aminomethyl-7-carbaguanine + guanosine(34) in tRNA = 7-aminomethyl-7-carbaguanosine(34) in tRNA + guanine. It participates in tRNA modification; tRNA-queuosine biosynthesis. In terms of biological role, catalyzes the base-exchange of a guanine (G) residue with the queuine precursor 7-aminomethyl-7-deazaguanine (PreQ1) at position 34 (anticodon wobble position) in tRNAs with GU(N) anticodons (tRNA-Asp, -Asn, -His and -Tyr). Catalysis occurs through a double-displacement mechanism. The nucleophile active site attacks the C1' of nucleotide 34 to detach the guanine base from the RNA, forming a covalent enzyme-RNA intermediate. The proton acceptor active site deprotonates the incoming PreQ1, allowing a nucleophilic attack on the C1' of the ribose to form the product. After dissociation, two additional enzymatic reactions on the tRNA convert PreQ1 to queuine (Q), resulting in the hypermodified nucleoside queuosine (7-(((4,5-cis-dihydroxy-2-cyclopenten-1-yl)amino)methyl)-7-deazaguanosine). The protein is Queuine tRNA-ribosyltransferase of Streptococcus thermophilus (strain CNRZ 1066).